We begin with the raw amino-acid sequence, 189 residues long: Adenylate kinase (189 aa).

10–15 (AAGKGT) is a binding site for ATP. The segment at 30-59 (STGDMLRAARASGSELGQRVAKIMDEGGLV) is NMP. AMP-binding positions include threonine 31, arginine 36, 57–59 (GLV), 85–88 (GFPR), and glutamine 92. The segment at 126–136 (KRFEEQGRADD) is LID. Position 127 (arginine 127) interacts with ATP. 2 residues coordinate AMP: arginine 133 and arginine 144. An ATP-binding site is contributed by glycine 172.

Belongs to the adenylate kinase family. In terms of assembly, monomer.

It localises to the cytoplasm. The enzyme catalyses AMP + ATP = 2 ADP. The protein operates within purine metabolism; AMP biosynthesis via salvage pathway; AMP from ADP: step 1/1. Functionally, catalyzes the reversible transfer of the terminal phosphate group between ATP and AMP. Plays an important role in cellular energy homeostasis and in adenine nucleotide metabolism. The chain is Adenylate kinase from Hyphomonas neptunium (strain ATCC 15444).